The following is a 308-amino-acid chain: Olfactory receptor 5K1 (308 aa).

The Extracellular portion of the chain corresponds to 1-25; sequence MAEENHTMKNEFILTGFTDHPELKT. The N-linked (GlcNAc...) asparagine glycan is linked to Asn5. A helical transmembrane segment spans residues 26-46; it reads LLFVVFFAIYLITVVGNISLV. Topologically, residues 47–54 are cytoplasmic; the sequence is ALIFTHRR. Residues 55–75 traverse the membrane as a helical segment; the sequence is LHTPMYIFLGNLALVDSCCAC. Residues 76 to 99 are Extracellular-facing; it reads AITPKMLENFFSENKRISLYECAV. Cys97 and Cys189 are disulfide-bonded. Residues 100-120 traverse the membrane as a helical segment; it reads QFYFLCTVETADCFLLAAMAY. Residues 121 to 139 are Cytoplasmic-facing; the sequence is DRYVAICNPLQYHIMMSKK. A helical membrane pass occupies residues 140-160; the sequence is LCIQMTTGAFIAGNLHSMIHV. Topologically, residues 161 to 196 are extracellular; it reads GLVFRLVFCGSNHINHFYCDILPLYRLSCVDPYINE. A helical transmembrane segment spans residues 197–217; sequence LVLFIFSGSVQVFTIGSVLIS. The Cytoplasmic portion of the chain corresponds to 218–237; it reads YLYILLTIFKMKSKEGRAKA. Residues 238–258 form a helical membrane-spanning segment; it reads FSTCASHFLSVSLFYGSLFFM. Residues 259-271 lie on the Extracellular side of the membrane; it reads YVRPNLLEEGDKD. The chain crosses the membrane as a helical span at residues 272 to 292; sequence IPAAILFTIVVPLLNPFIYSL. The Cytoplasmic segment spans residues 293 to 308; it reads RNREVISVLRKILMKK.

This sequence belongs to the G-protein coupled receptor 1 family.

Its subcellular location is the cell membrane. Its function is as follows. Odorant receptor. The sequence is that of Olfactory receptor 5K1 (OR5K1) from Homo sapiens (Human).